A 455-amino-acid polypeptide reads, in one-letter code: Chromosomal replication initiator protein DnaA (455 aa).

The segment at 1–73 (METSLETLWS…RDVVHEILGH (73 aa)) is domain I, interacts with DnaA modulators. Residues 73-116 (HPVEIQIEIAQGDSNATISAPEVASPPPTASPVENTNTSQRQQA) form a domain II region. A disordered region spans residues 92–116 (APEVASPPPTASPVENTNTSQRQQA). Residues 104–116 (PVENTNTSQRQQA) are compositionally biased toward polar residues. The interval 117–333 (SLNPKYVFSR…GALIRAVAYI (217 aa)) is domain III, AAA+ region. Residues Gly-161, Gly-163, Lys-164, and Thr-165 each coordinate ATP. Residues 334–455 (SISGLPMNVE…GDRIKLANQP (122 aa)) form a domain IV, binds dsDNA region.

This sequence belongs to the DnaA family. As to quaternary structure, oligomerizes as a right-handed, spiral filament on DNA at oriC.

Its subcellular location is the cytoplasm. Functionally, plays an essential role in the initiation and regulation of chromosomal replication. ATP-DnaA binds to the origin of replication (oriC) to initiate formation of the DNA replication initiation complex once per cell cycle. Binds the DnaA box (a 9 base pair repeat at the origin) and separates the double-stranded (ds)DNA. Forms a right-handed helical filament on oriC DNA; dsDNA binds to the exterior of the filament while single-stranded (ss)DNA is stabiized in the filament's interior. The ATP-DnaA-oriC complex binds and stabilizes one strand of the AT-rich DNA unwinding element (DUE), permitting loading of DNA polymerase. After initiation quickly degrades to an ADP-DnaA complex that is not apt for DNA replication. Binds acidic phospholipids. In Acaryochloris marina (strain MBIC 11017), this protein is Chromosomal replication initiator protein DnaA.